The primary structure comprises 116 residues: MRVKTGVVRRRRHKKVLKLARGFYSGRRKHFRKAKEQLERSMYYAFRDRKQKKREFRSLWVVRINAACRMHNTSYSRFMHALKVAGVELDRKVLADMAMNDMQAFESVLESVKEHL.

It belongs to the bacterial ribosomal protein bL20 family.

In terms of biological role, binds directly to 23S ribosomal RNA and is necessary for the in vitro assembly process of the 50S ribosomal subunit. It is not involved in the protein synthesizing functions of that subunit. The chain is Large ribosomal subunit protein bL20 from Helicobacter pylori (strain Shi470).